Here is a 315-residue protein sequence, read N- to C-terminus: Ribosomal protein L11 methyltransferase (315 aa).

Positions 162, 183, 205, and 248 each coordinate S-adenosyl-L-methionine.

It belongs to the methyltransferase superfamily. PrmA family.

Its subcellular location is the cytoplasm. It carries out the reaction L-lysyl-[protein] + 3 S-adenosyl-L-methionine = N(6),N(6),N(6)-trimethyl-L-lysyl-[protein] + 3 S-adenosyl-L-homocysteine + 3 H(+). Its function is as follows. Methylates ribosomal protein L11. In Enterococcus faecalis (strain ATCC 700802 / V583), this protein is Ribosomal protein L11 methyltransferase.